Reading from the N-terminus, the 122-residue chain is Large ribosomal subunit protein uL14 (122 aa).

This sequence belongs to the universal ribosomal protein uL14 family. Part of the 50S ribosomal subunit. Forms a cluster with proteins L3 and L19. In the 70S ribosome, L14 and L19 interact and together make contacts with the 16S rRNA in bridges B5 and B8.

Functionally, binds to 23S rRNA. Forms part of two intersubunit bridges in the 70S ribosome. The polypeptide is Large ribosomal subunit protein uL14 (Helicobacter acinonychis (strain Sheeba)).